Consider the following 29-residue polypeptide: NADH dehydrogenase [ubiquinone] 1 beta subcomplex subunit 10 (29 aa).

Residues glycine 1–leucine 29 form a disordered region.

Belongs to the complex I NDUFB10 subunit family. As to quaternary structure, complex I is composed of about 45 different subunits.

It is found in the mitochondrion inner membrane. In terms of biological role, accessory subunit of the mitochondrial membrane respiratory chain NADH dehydrogenase (Complex I), that is believed not to be involved in catalysis. Complex I functions in the transfer of electrons from NADH to the respiratory chain. The immediate electron acceptor for the enzyme is believed to be ubiquinone. The protein is NADH dehydrogenase [ubiquinone] 1 beta subcomplex subunit 10 of Solanum tuberosum (Potato).